Reading from the N-terminus, the 820-residue chain is Leucine--tRNA ligase (820 aa).

The short motif at 40-51 is the 'HIGH' region element; sequence PYPSGAGLHVGH. Positions 601-605 match the 'KMSKS' region motif; that stretch reads KMSKS. Residue K604 participates in ATP binding.

Belongs to the class-I aminoacyl-tRNA synthetase family.

It localises to the cytoplasm. The enzyme catalyses tRNA(Leu) + L-leucine + ATP = L-leucyl-tRNA(Leu) + AMP + diphosphate. This chain is Leucine--tRNA ligase, found in Chlamydia abortus (strain DSM 27085 / S26/3) (Chlamydophila abortus).